A 286-amino-acid polypeptide reads, in one-letter code: Ribosomal RNA small subunit methyltransferase A (286 aa).

Residues Asn28, Leu30, Gly55, Glu77, Asp103, and Asn123 each contribute to the S-adenosyl-L-methionine site.

The protein belongs to the class I-like SAM-binding methyltransferase superfamily. rRNA adenine N(6)-methyltransferase family. RsmA subfamily.

Its subcellular location is the cytoplasm. It catalyses the reaction adenosine(1518)/adenosine(1519) in 16S rRNA + 4 S-adenosyl-L-methionine = N(6)-dimethyladenosine(1518)/N(6)-dimethyladenosine(1519) in 16S rRNA + 4 S-adenosyl-L-homocysteine + 4 H(+). Specifically dimethylates two adjacent adenosines (A1518 and A1519) in the loop of a conserved hairpin near the 3'-end of 16S rRNA in the 30S particle. May play a critical role in biogenesis of 30S subunits. The polypeptide is Ribosomal RNA small subunit methyltransferase A (Rhodopseudomonas palustris (strain BisB18)).